Reading from the N-terminus, the 234-residue chain is Large ribosomal subunit protein uL1c (234 aa).

This sequence belongs to the universal ribosomal protein uL1 family. As to quaternary structure, part of the 50S ribosomal subunit.

The protein localises to the plastid. It is found in the chloroplast. Functionally, binds directly to 23S rRNA. Might be involved in E site tRNA release (Potential). The polypeptide is Large ribosomal subunit protein uL1c (rpl1) (Rhodomonas salina (Cryptomonas salina)).